The primary structure comprises 584 residues: MNNHIEALSYYLGAFVDELARLNVCDVVISPGSRSTPLALLMEQHEQIKTYLHVDERSAAFFALGMAKAKKQPVAILCTSGTAAANYYPAVCEAYHARVPLLVLTADRPHELRDVGAPQAMNQFNLYGSFVKQFMEMALPEAREPMYQYVRMAAGRAVASASFAPMGPVHMNFPLREPLIPDFSLDGLWEQGCGEYTNRVQQGSMTLTSEYIRSLIKRLSRLEKGLIVCGDDSHLELVEVIAEFAEKTGYPVLADPLSNLRTGSHNQTMIIDCYDTFLRNELLKDTWKPDIIIRFGGMPVSKALTQYIKKQESAVHIIVDESGKWRDPALMTTEVVSASDVAFCKAMTEHMQKREQNDWFKKWKHINDKTKETLREVEAYDTAFEGKVITDIVRILPEGATLFVSNSMPIRDADTFLFTNEKKIHVMANRGVNGIDGIISTALGASTVCEPLVLVIGDLSFYHDLNGLLAAKLHDLNITIVVVNNDGGGIFSFLPQYESKEHFESLFGTPLGLDYEHVVKMYGGSFVRVSGWEAFREEVQKGIIERGLHVVEICTNREENVQLHRKLWAKSVIEIKDMLQGDTE.

The protein belongs to the TPP enzyme family. MenD subfamily. As to quaternary structure, homodimer. Requires Mg(2+) as cofactor. Mn(2+) is required as a cofactor. Thiamine diphosphate serves as cofactor.

The enzyme catalyses isochorismate + 2-oxoglutarate + H(+) = 5-enolpyruvoyl-6-hydroxy-2-succinyl-cyclohex-3-ene-1-carboxylate + CO2. The protein operates within quinol/quinone metabolism; 1,4-dihydroxy-2-naphthoate biosynthesis; 1,4-dihydroxy-2-naphthoate from chorismate: step 2/7. It participates in quinol/quinone metabolism; menaquinone biosynthesis. Catalyzes the thiamine diphosphate-dependent decarboxylation of 2-oxoglutarate and the subsequent addition of the resulting succinic semialdehyde-thiamine pyrophosphate anion to isochorismate to yield 2-succinyl-5-enolpyruvyl-6-hydroxy-3-cyclohexene-1-carboxylate (SEPHCHC). The sequence is that of 2-succinyl-5-enolpyruvyl-6-hydroxy-3-cyclohexene-1-carboxylate synthase from Bacillus cytotoxicus (strain DSM 22905 / CIP 110041 / 391-98 / NVH 391-98).